The following is a 591-amino-acid chain: Aspartate--tRNA ligase (591 aa).

Position 171 (glutamate 171) interacts with L-aspartate. An aspartate region spans residues 195 to 198 (QLFK). Residue arginine 217 participates in L-aspartate binding. ATP-binding positions include 217–219 (RDE) and glutamine 226. Residue histidine 448 coordinates L-aspartate. Glutamate 482 is an ATP binding site. Arginine 489 is a binding site for L-aspartate. 534 to 537 (GLDR) is a binding site for ATP.

It belongs to the class-II aminoacyl-tRNA synthetase family. Type 1 subfamily. In terms of assembly, homodimer.

The protein localises to the cytoplasm. It catalyses the reaction tRNA(Asp) + L-aspartate + ATP = L-aspartyl-tRNA(Asp) + AMP + diphosphate. In terms of biological role, catalyzes the attachment of L-aspartate to tRNA(Asp) in a two-step reaction: L-aspartate is first activated by ATP to form Asp-AMP and then transferred to the acceptor end of tRNA(Asp). In Edwardsiella ictaluri (strain 93-146), this protein is Aspartate--tRNA ligase.